The primary structure comprises 314 residues: Methionyl-tRNA formyltransferase (314 aa).

(6S)-5,6,7,8-tetrahydrofolate is bound at residue 110-113; the sequence is SLLP.

Belongs to the Fmt family.

The enzyme catalyses L-methionyl-tRNA(fMet) + (6R)-10-formyltetrahydrofolate = N-formyl-L-methionyl-tRNA(fMet) + (6S)-5,6,7,8-tetrahydrofolate + H(+). Its function is as follows. Attaches a formyl group to the free amino group of methionyl-tRNA(fMet). The formyl group appears to play a dual role in the initiator identity of N-formylmethionyl-tRNA by promoting its recognition by IF2 and preventing the misappropriation of this tRNA by the elongation apparatus. The protein is Methionyl-tRNA formyltransferase of Bacillus cytotoxicus (strain DSM 22905 / CIP 110041 / 391-98 / NVH 391-98).